The following is a 118-amino-acid chain: Holo-[acyl-carrier-protein] synthase (118 aa).

Asp-8 and Glu-57 together coordinate Mg(2+).

The protein belongs to the P-Pant transferase superfamily. AcpS family. The cofactor is Mg(2+).

Its subcellular location is the cytoplasm. It catalyses the reaction apo-[ACP] + CoA = holo-[ACP] + adenosine 3',5'-bisphosphate + H(+). Functionally, transfers the 4'-phosphopantetheine moiety from coenzyme A to a Ser of acyl-carrier-protein. The protein is Holo-[acyl-carrier-protein] synthase of Acholeplasma laidlawii (strain PG-8A).